A 123-amino-acid chain; its full sequence is Protein LLP homolog (123 aa).

Over residues 1 to 21 (MAKSIRSKWKRKMRAEKRKKN) the composition is skewed to basic residues. Disordered regions lie at residues 1–23 (MAKS…KNAP) and 55–123 (KINE…KLAW). Residues 70 to 89 (DSSKMDMELKRNKKNLRDQH) show a composition bias toward basic and acidic residues. A compositionally biased stretch (basic residues) spans 100 to 123 (QQKKLKSQCGKKKGKSKQAKKLAW).

It belongs to the learning-associated protein family.

The protein resides in the nucleus. Its subcellular location is the nucleolus. It localises to the chromosome. In terms of biological role, regulates dendritic and spine growth and synaptic transmission. In Xenopus tropicalis (Western clawed frog), this protein is Protein LLP homolog (llph).